The primary structure comprises 65 residues: Large ribosomal subunit protein uL29 (65 aa).

It belongs to the universal ribosomal protein uL29 family.

In Acinetobacter baylyi (strain ATCC 33305 / BD413 / ADP1), this protein is Large ribosomal subunit protein uL29.